The primary structure comprises 577 residues: Arginine--tRNA ligase (577 aa).

The 'HIGH' region signature appears at 122–132; it reads PNVAKEMHVGH.

Belongs to the class-I aminoacyl-tRNA synthetase family. In terms of assembly, monomer.

The protein localises to the cytoplasm. It catalyses the reaction tRNA(Arg) + L-arginine + ATP = L-arginyl-tRNA(Arg) + AMP + diphosphate. In Salmonella arizonae (strain ATCC BAA-731 / CDC346-86 / RSK2980), this protein is Arginine--tRNA ligase.